We begin with the raw amino-acid sequence, 781 residues long: Probable aminopeptidase 2 (781 aa).

Substrate contacts are provided by residues Glu-105 and Gly-237 to Asn-241. His-272 is a binding site for Zn(2+). Glu-273 acts as the Proton acceptor in catalysis. Residues His-276 and Glu-295 each contribute to the Zn(2+) site.

The protein belongs to the peptidase M1 family. Zn(2+) serves as cofactor.

It localises to the cytoplasm. The protein is Probable aminopeptidase 2 (ape2) of Sulfurisphaera tokodaii (strain DSM 16993 / JCM 10545 / NBRC 100140 / 7) (Sulfolobus tokodaii).